The sequence spans 159 residues: 2-C-methyl-D-erythritol 2,4-cyclodiphosphate synthase (159 aa).

Aspartate 8 and histidine 10 together coordinate a divalent metal cation. Residues 8–10 (DVH) and 34–35 (HS) contribute to the 4-CDP-2-C-methyl-D-erythritol 2-phosphate site. Position 42 (histidine 42) interacts with a divalent metal cation. Residues 56 to 58 (DIG), 61 to 65 (FPDTD), 100 to 106 (AQAPKML), 132 to 135 (TTTE), phenylalanine 139, and arginine 142 each bind 4-CDP-2-C-methyl-D-erythritol 2-phosphate.

The protein belongs to the IspF family. Homotrimer. A divalent metal cation serves as cofactor.

It carries out the reaction 4-CDP-2-C-methyl-D-erythritol 2-phosphate = 2-C-methyl-D-erythritol 2,4-cyclic diphosphate + CMP. Its pathway is isoprenoid biosynthesis; isopentenyl diphosphate biosynthesis via DXP pathway; isopentenyl diphosphate from 1-deoxy-D-xylulose 5-phosphate: step 4/6. In terms of biological role, involved in the biosynthesis of isopentenyl diphosphate (IPP) and dimethylallyl diphosphate (DMAPP), two major building blocks of isoprenoid compounds. Catalyzes the conversion of 4-diphosphocytidyl-2-C-methyl-D-erythritol 2-phosphate (CDP-ME2P) to 2-C-methyl-D-erythritol 2,4-cyclodiphosphate (ME-CPP) with a corresponding release of cytidine 5-monophosphate (CMP). This is 2-C-methyl-D-erythritol 2,4-cyclodiphosphate synthase from Salmonella arizonae (strain ATCC BAA-731 / CDC346-86 / RSK2980).